An 811-amino-acid chain; its full sequence is Probable glutamine--tRNA ligase (811 aa).

The segment at 190–217 is disordered; that stretch reads DAAAGKKKGAKAKNSKQKTVDSGKAKEQ. A compositionally biased stretch (basic residues) spans 194-205; sequence GKKKGAKAKNSK. The span at 207-217 shows a compositional bias: basic and acidic residues; sequence KTVDSGKAKEQ. The short motif at 269-279 is the 'HIGH' region element; the sequence is PEPNGYLHIGH. ATP-binding positions include 270–272 and 276–282; these read EPN and HIGHSKA. L-glutamine contacts are provided by D302 and Y447. Residues T466, 495 to 496, and 503 to 505 contribute to the ATP site; these read RL and MSK. The short motif at 502-506 is the 'KMSKS' region element; sequence LMSKR.

Belongs to the class-I aminoacyl-tRNA synthetase family.

The protein resides in the cytoplasm. It carries out the reaction tRNA(Gln) + L-glutamine + ATP = L-glutaminyl-tRNA(Gln) + AMP + diphosphate. The sequence is that of Probable glutamine--tRNA ligase (qrs1) from Schizosaccharomyces pombe (strain 972 / ATCC 24843) (Fission yeast).